Reading from the N-terminus, the 261-residue chain is Cytochrome c oxidase subunit 3 (261 aa).

The Mitochondrial matrix portion of the chain corresponds to 1 to 15 (MTHQTHAYHMVNPSP). The chain crosses the membrane as a helical span at residues 16–34 (WPLTGALSALLMTSGLIMW). The Mitochondrial intermembrane segment spans residues 35–40 (FHFNST). The chain crosses the membrane as a helical span at residues 41–66 (TLLMLGLTTNMLTMYQWWRDVIREST). Residues 67-72 (FQGHHT) are Mitochondrial matrix-facing. The chain crosses the membrane as a helical span at residues 73–105 (PNVQKGLRYGMILFIISEVLFFTGFFWAFYHSS). The Mitochondrial intermembrane portion of the chain corresponds to 106–128 (LAPTPELGGCWPPTGIHPLNPLE). Residues 129–152 (VPLLNTSVLLASGVSITWAHHSLM) form a helical membrane-spanning segment. Residues 153–155 (EGN) are Mitochondrial matrix-facing. A helical transmembrane segment spans residues 156-183 (RNHMLQALFITIALGVYFTLLQASEYYE). Residues 184-190 (APFTISD) lie on the Mitochondrial intermembrane side of the membrane. The helical transmembrane segment at 191–223 (GVYGSTFFVATGFHGLHVIIGSTFLIVCFFRQL) threads the bilayer. Over 224-232 (KFHFTSNHH) the chain is Mitochondrial matrix. Residues 233–256 (FGFEAAAWYWHFVDVVWLFLYVSI) form a helical membrane-spanning segment. The Mitochondrial intermembrane segment spans residues 257 to 261 (YWWGS).

This sequence belongs to the cytochrome c oxidase subunit 3 family. As to quaternary structure, component of the cytochrome c oxidase (complex IV, CIV), a multisubunit enzyme composed of 14 subunits. The complex is composed of a catalytic core of 3 subunits MT-CO1, MT-CO2 and MT-CO3, encoded in the mitochondrial DNA, and 11 supernumerary subunits COX4I, COX5A, COX5B, COX6A, COX6B, COX6C, COX7A, COX7B, COX7C, COX8 and NDUFA4, which are encoded in the nuclear genome. The complex exists as a monomer or a dimer and forms supercomplexes (SCs) in the inner mitochondrial membrane with NADH-ubiquinone oxidoreductase (complex I, CI) and ubiquinol-cytochrome c oxidoreductase (cytochrome b-c1 complex, complex III, CIII), resulting in different assemblies (supercomplex SCI(1)III(2)IV(1) and megacomplex MCI(2)III(2)IV(2)).

Its subcellular location is the mitochondrion inner membrane. The catalysed reaction is 4 Fe(II)-[cytochrome c] + O2 + 8 H(+)(in) = 4 Fe(III)-[cytochrome c] + 2 H2O + 4 H(+)(out). Its function is as follows. Component of the cytochrome c oxidase, the last enzyme in the mitochondrial electron transport chain which drives oxidative phosphorylation. The respiratory chain contains 3 multisubunit complexes succinate dehydrogenase (complex II, CII), ubiquinol-cytochrome c oxidoreductase (cytochrome b-c1 complex, complex III, CIII) and cytochrome c oxidase (complex IV, CIV), that cooperate to transfer electrons derived from NADH and succinate to molecular oxygen, creating an electrochemical gradient over the inner membrane that drives transmembrane transport and the ATP synthase. Cytochrome c oxidase is the component of the respiratory chain that catalyzes the reduction of oxygen to water. Electrons originating from reduced cytochrome c in the intermembrane space (IMS) are transferred via the dinuclear copper A center (CU(A)) of subunit 2 and heme A of subunit 1 to the active site in subunit 1, a binuclear center (BNC) formed by heme A3 and copper B (CU(B)). The BNC reduces molecular oxygen to 2 water molecules using 4 electrons from cytochrome c in the IMS and 4 protons from the mitochondrial matrix. The polypeptide is Cytochrome c oxidase subunit 3 (MT-CO3) (Antilope cervicapra (Blackbuck)).